Here is a 231-residue protein sequence, read N- to C-terminus: Small ribosomal subunit protein uS3c (231 aa).

One can recognise a KH type-2 domain in the interval 39-123 (LRNFIKKKYI…HLRLSVKPLR (85 aa)).

This sequence belongs to the universal ribosomal protein uS3 family. Part of the 30S ribosomal subunit.

Its subcellular location is the plastid. It is found in the chloroplast. The protein is Small ribosomal subunit protein uS3c (rps3) of Chlorella vulgaris (Green alga).